A 369-amino-acid polypeptide reads, in one-letter code: Fructose-bisphosphate aldolase 2 (369 aa).

Aspartate 40 serves as a coordination point for dihydroxyacetone phosphate. D-glyceraldehyde 3-phosphate is bound by residues serine 42 and threonine 45. Arginine 49 is a binding site for beta-D-fructose 1,6-bisphosphate. Position 113 (lysine 113) interacts with D-glyceraldehyde 3-phosphate. Residue lysine 152 coordinates dihydroxyacetone phosphate. Glutamate 195 is a D-glyceraldehyde 3-phosphate binding site. Glutamate 195 functions as the Proton acceptor in the catalytic mechanism. Lysine 237, serine 279, and glycine 280 together coordinate dihydroxyacetone phosphate. Residue lysine 237 is the Schiff-base intermediate with dihydroxyacetone phosphate of the active site. Beta-D-fructose 1,6-bisphosphate is bound by residues 279–281 (SGG) and serine 307. Residues glycine 309 and arginine 310 each coordinate dihydroxyacetone phosphate. Residue arginine 310 coordinates beta-D-fructose 1,6-bisphosphate.

The protein belongs to the class I fructose-bisphosphate aldolase family.

Its subcellular location is the cytoplasm. It is found in the membrane. The protein resides in the host cell membrane. The catalysed reaction is beta-D-fructose 1,6-bisphosphate = D-glyceraldehyde 3-phosphate + dihydroxyacetone phosphate. It participates in carbohydrate degradation; glycolysis; D-glyceraldehyde 3-phosphate and glycerone phosphate from D-glucose: step 4/4. Its function is as follows. Plays a key role in glycolysis by catalyzing the cleavage of fructose 1,6-bisphosphate into dihydroxyacetone phosphate and glyceraldehyde 3-phosphate. This is Fructose-bisphosphate aldolase 2 (ALDO2) from Plasmodium berghei (strain Anka).